Here is a 43-residue protein sequence, read N- to C-terminus: Protein PsbN (43 aa).

Residues 4 to 24 traverse the membrane as a helical segment; it reads ATIIVIFVSSLLLGITAYSIY.

The protein belongs to the PsbN family.

The protein localises to the plastid. It is found in the chloroplast thylakoid membrane. May play a role in photosystem I and II biogenesis. This is Protein PsbN from Trieres chinensis (Marine centric diatom).